The primary structure comprises 705 residues: MTKLGFLRLSYEKQDTLLKLLILSMAAVLSFSTRLFAVLRFESVIHEFDPYFNYRTTRFLAEEGFYKFHNWFDDRAWYPLGRIIGGTIYPGLMITSAAIYHVLHFFHITIDIRNVCVFLAPLFSSFTTIVTYHLTKELKDAGAGLLAAAMIAVVPGYISRSVAGSYDNEGIAIFCMLLTYYMWIKAVKTGSIYWAAKCALAYFYMVSSWGGYVFLINLIPLHVLVLMLTGRFSHRIYVAYCTVYCLGTILSMQISFVGFQPVLSSEHMAAFGVFGLCQIHAFVDYLRSKLNPQQFEVLFRSVISLVGFVLLTVGALLMLTGKISPWTGRFYSLLDPSYAKNNIPIIASVSEHQPTTWSSYYFDLQLLVFMFPVGLYYCFSNLSDARIFIIMYGVTSMYFSAVMVRLMLVLAPVMCILSGIGVSQVLSTYMKNLDISRPDKKSKKQQDSTYPIKNEVASGMILVMAFFLITYTFHSTWVTSEAYSSPSIVLSARGGDGSRIIFDDFREAYYWLRHNTPEDAKVMSWWDYGYQITAMANRTILVDNNTWNNTHISRVGQAMASTEEKAYEIMRELDVSYVLVIFGGLTGYSSDDINKFLWMVRIGGSTETGRHIKENDYYTPTGEFRVDREGSPVLLNCLMYKMCYYRFGQVYTEAKRPPGFDRVRNAEIGNKDFELDVLEEAYTTEHWLVRIYKVKDLDNRGLSRT.

The Cytoplasmic portion of the chain corresponds to 1-17 (MTKLGFLRLSYEKQDTL). A helical membrane pass occupies residues 18–38 (LKLLILSMAAVLSFSTRLFAV). Over 39-119 (LRFESVIHEF…IDIRNVCVFL (81 aa)) the chain is Lumenal. The DXD motif 1 motif lies at 47–49 (EFD). D49 provides a ligand contact to Mn(2+). The helical transmembrane segment at 120–138 (APLFSSFTTIVTYHLTKEL) threads the bilayer. At 139-140 (KD) the chain is on the cytoplasmic side. The helical transmembrane segment at 141–158 (AGAGLLAAAMIAVVPGYI) threads the bilayer. Topologically, residues 159-169 (SRSVAGSYDNE) are lumenal. Positions 167 and 169 each coordinate Mn(2+). A DXD motif 2 motif is present at residues 167 to 169 (DNE). Residues 170-189 (GIAIFCMLLTYYMWIKAVKT) traverse the membrane as a helical segment. Over 190–191 (GS) the chain is Cytoplasmic. A helical transmembrane segment spans residues 192 to 206 (IYWAAKCALAYFYMV). Residues 207-211 (SSWGG) lie on the Lumenal side of the membrane. The helical transmembrane segment at 212–228 (YVFLINLIPLHVLVLML) threads the bilayer. The Cytoplasmic portion of the chain corresponds to 229–233 (TGRFS). A helical membrane pass occupies residues 234-259 (HRIYVAYCTVYCLGTILSMQISFVGF). The Lumenal segment spans residues 260–267 (QPVLSSEH). Residues 268 to 287 (MAAFGVFGLCQIHAFVDYLR) traverse the membrane as a helical segment. The Cytoplasmic portion of the chain corresponds to 288 to 300 (SKLNPQQFEVLFR). The chain crosses the membrane as a helical span at residues 301-321 (SVISLVGFVLLTVGALLMLTG). The Lumenal portion of the chain corresponds to 322–356 (KISPWTGRFYSLLDPSYAKNNIPIIASVSEHQPTT). Residues 348–351 (SVSE) carry the SVSE motif motif. A helical membrane pass occupies residues 357–379 (WSSYYFDLQLLVFMFPVGLYYCF). Over 380-385 (SNLSDA) the chain is Cytoplasmic. The chain crosses the membrane as a helical span at residues 386-402 (RIFIIMYGVTSMYFSAV). At 403–406 (MVRL) the chain is on the lumenal side. Position 405 (R405) interacts with dolichyl diphosphooligosaccharide. A helical transmembrane segment spans residues 407–428 (MLVLAPVMCILSGIGVSQVLST). Residues 429 to 453 (YMKNLDISRPDKKSKKQQDSTYPIK) are Cytoplasmic-facing. A helical transmembrane segment spans residues 454 to 473 (NEVASGMILVMAFFLITYTF). The Lumenal portion of the chain corresponds to 474–705 (HSTWVTSEAY…DLDNRGLSRT (232 aa)). The tract at residues 525 to 527 (WWD) is interacts with target acceptor peptide in protein substrate. The WWDYG motif motif lies at 525-529 (WWDYG). Position 530 (Y530) interacts with dolichyl diphosphooligosaccharide. Residues N537 and N544 are each glycosylated (N-linked (GlcNAc...) asparagine). N-linked (GlcNAc...) (high mannose) asparagine glycosylation is present at N548. The DK motif signature appears at 592 to 599 (DINKFLWM).

This sequence belongs to the STT3 family. Component of the oligosaccharyltransferase (OST) complex. There are 2 OST complexes, OST-A and OST-B, which contain STT3A or STT3B as catalytic subunit, respectively. OST-A and OST-B contain common core subunits RPN1, RPN2, OST48, OST4, DAD1 and TMEM258, and OST-A contains DC2/OSTC and KRTCAP2/KCP2 specific accessory subunits. OST-A complex assembly occurs through the formation of 3 subcomplexes. Subcomplex 1 contains RPN1 and TMEM258, subcomplex 2 contains the OST-A-specific subunits STT3A, DC2/OSTC, and KCP2 as well as the core subunit OST4, and subcomplex 3 contains RPN2, DAD1, and OST48. The OST-A complex can form stable complexes with the Sec61 complex or with both the Sec61 and TRAP complexes. It depends on Mg(2+) as a cofactor. The cofactor is Mn(2+).

The protein resides in the endoplasmic reticulum. Its subcellular location is the endoplasmic reticulum membrane. It carries out the reaction a di-trans,poly-cis-dolichyl diphosphooligosaccharide + L-asparaginyl-[protein] = N(4)-(oligosaccharide-(1-&gt;4)-N-acetyl-beta-D-glucosaminyl-(1-&gt;4)-N-acetyl-beta-D-glucosaminyl)-L-asparaginyl-[protein] + a di-trans,poly-cis-dolichyl diphosphate + H(+). It functions in the pathway protein modification; protein glycosylation. Catalytic subunit of the oligosaccharyl transferase (OST) complex that catalyzes the initial transfer of a defined glycan (Glc(3)Man(9)GlcNAc(2) in eukaryotes) from the lipid carrier dolichol-pyrophosphate to an asparagine residue within an Asn-X-Ser/Thr consensus motif in nascent polypeptide chains, the first step in protein N-glycosylation. N-glycosylation occurs cotranslationally and the complex associates with the Sec61 complex at the channel-forming translocon complex that mediates protein translocation across the endoplasmic reticulum (ER). All subunits are required for a maximal enzyme activity. This subunit contains the active site and the acceptor peptide and donor lipid-linked oligosaccharide (LLO) binding pockets. STT3A is present in the majority of OST complexes and mediates cotranslational N-glycosylation of most sites on target proteins, while STT3B-containing complexes are required for efficient post-translational glycosylation and mediate glycosylation of sites that have been skipped by STT3A. STT3A-containing OST-A complex is also required to prevent hyperglycosylation of some target proteins by preventing glycosylation of facultative sites before folding of target proteins is completed. The chain is Dolichyl-diphosphooligosaccharide--protein glycosyltransferase subunit STT3A from Mus musculus (Mouse).